Here is a 396-residue protein sequence, read N- to C-terminus: Elongation factor Tu (396 aa).

A tr-type G domain is found at 10–206 (KPHVNVGTIG…ALDTYIPTPE (197 aa)). The tract at residues 19 to 26 (GHVDHGKT) is G1. 19–26 (GHVDHGKT) lines the GTP pocket. Position 26 (Thr26) interacts with Mg(2+). The tract at residues 60–64 (GITIN) is G2. A G3 region spans residues 81-84 (DCPG). GTP is bound by residues 81–85 (DCPGH) and 136–139 (NKCD). The interval 136-139 (NKCD) is G4. The tract at residues 174–176 (SAK) is G5.

Belongs to the TRAFAC class translation factor GTPase superfamily. Classic translation factor GTPase family. EF-Tu/EF-1A subfamily. As to quaternary structure, monomer.

It localises to the cytoplasm. It catalyses the reaction GTP + H2O = GDP + phosphate + H(+). GTP hydrolase that promotes the GTP-dependent binding of aminoacyl-tRNA to the A-site of ribosomes during protein biosynthesis. In Burkholderia cenocepacia (strain HI2424), this protein is Elongation factor Tu.